A 116-amino-acid chain; its full sequence is Somatostatin (116 aa).

An N-terminal signal peptide occupies residues 1-24; sequence MLSCRLQCALAALSIVLALGGVTG. The propeptide occupies 25-88; that stretch reads APSDPRLRQF…QDEMRLELQR (64 aa). Ala43 bears the Alanine amide mark. Cysteines 105 and 116 form a disulfide.

It belongs to the somatostatin family. C-terminal amidation of the neuronostatin peptide is required for its biological activity, including for the regulation of mean arterial pressure.

It localises to the secreted. In terms of biological role, inhibits the secretion of pituitary hormones, including that of growth hormone/somatotropin (GH1), PRL, ACTH, luteinizing hormone (LH) and TSH. Also impairs ghrelin- and GnRH-stimulated secretion of GH1 and LH; the inhibition of ghrelin-stimulated secretion of GH1 can be further increased by neuronostatin. Its function is as follows. May enhance low-glucose-induced glucagon release by pancreatic alpha cells. This effect may be mediated by binding to GPR107 and PKA activation. May regulate cardiac contractile function. May compromise cardiomyocyte viability. In the central nervous system, may impair memory retention and may affect hippocampal excitability. May also have anxiolytic and anorexigenic effects. May play a role in arterial pressure regulation. May inhibit basal, but not ghrelin- or GnRH-stimulated secretion of GH1 or LH, but does not affect the release of other pituitary hormones, including PRL, ACTH, FSH or TSH. Potentiates inhibitory action of somatostatin on ghrelin-stimulated secretion of GH1, but not that on GnRH-stimulated secretion of LH. The sequence is that of Somatostatin (SST) from Bos taurus (Bovine).